An 895-amino-acid polypeptide reads, in one-letter code: Pyruvate dehydrogenase E1 component (895 aa).

Residues 1 to 20 (MSAVPEQILGASSANDADPQ) form a disordered region.

As to quaternary structure, homodimer. Part of the PDH complex, consisting of multiple copies of pyruvate dehydrogenase (E1), dihydrolipoamide acetyltransferase (E2) and lipoamide dehydrogenase (E3). Thiamine diphosphate is required as a cofactor.

It carries out the reaction N(6)-[(R)-lipoyl]-L-lysyl-[protein] + pyruvate + H(+) = N(6)-[(R)-S(8)-acetyldihydrolipoyl]-L-lysyl-[protein] + CO2. Functionally, component of the pyruvate dehydrogenase (PDH) complex, that catalyzes the overall conversion of pyruvate to acetyl-CoA and CO(2). In Cupriavidus necator (strain ATCC 17699 / DSM 428 / KCTC 22496 / NCIMB 10442 / H16 / Stanier 337) (Ralstonia eutropha), this protein is Pyruvate dehydrogenase E1 component (pdhA).